The primary structure comprises 165 residues: Mitochondrial fission process protein 1 (165 aa).

The next 3 membrane-spanning stretches (helical) occupy residues 35–55 (ALVPVGAVWASYGVATTYVTA), 76–96 (VCVCVAVVDTFVWQALASVAV), and 130–150 (IGLSTIPFIITPIDRSVDLLL).

The protein belongs to the MTFP1 family.

Its subcellular location is the mitochondrion inner membrane. Its function is as follows. Involved in the mitochondrial division probably by regulating membrane fission. Loss-of-function leads to apoptosis. This is Mitochondrial fission process protein 1 (mtfp1) from Danio rerio (Zebrafish).